The following is an 875-amino-acid chain: Importin subunit beta-1 (875 aa).

An N-acetylmethionine modification is found at Met1. 5 HEAT repeats span residues 2 to 31 (ELITILEKTVSPDRLELEAAQKFLERAAVE), 33 to 64 (LPTFLVELSRVLANPGNSQVARVAAGLQIRLL), 84 to 122 (ANARREVKNYVLQTLGTETYRPSSASQCVAGIACAEIPV), 128 to 159 (LIPQLVANVTNPNSTEHMKESTLEAIGYICQD), and 169 to 201 (SNEILTAIIQGMRKEEPSNNVKLAATNALLNSL). Phosphoserine is present on Ser12. An Importin N-terminal domain is found at 21–100 (AQKFLERAAV…KNYVLQTLGT (80 aa)). At Lys210 the chain carries N6-acetyllysine. HEAT repeat units lie at residues 211–246 (ESERHFIMQVVCEATQCPDTRVRVAALQNLVKIMSL), 252–301 (ETYM…EAAE), 313–359 (YAKG…TCCE), 363–393 (VPHVLPFIKEHIKNPDWRYRDAAVMAFGSIL), 401–437 (LKPLVIQAMPTLIELMKDPSVVVRDTTAWTVGRICEL), 448–484 (LAPLLQCLIEGLSAEPRVASNVCWAFSSLAEAAYEAA), 499–536 (SSSFELIVQKLLETTDRPDGHQNNLRSSAYESLMEIVK), 543–591 (YPAV…QNVL), 599–638 (ALQISDVVMASLLRMFQSTAGSGGVQEDALMAVSTLVEVL), 643–680 (LKYMEAFKPFLGIGLKNYAECQVCLAAVGLVGDLCRAL), 685–723 (LPFCDEVMQLLLENLGNENVHRSVKPQILSVFGDITLAI), 731–775 (LEVV…VQGL), 785–828 (DVML…CTAF), and 830–872 (KDVL…RKLK). The essential for high affinity interaction with RPL23A stretch occupies residues 285 to 461 (VCDEEMDLAI…LQCLIEGLSA (177 aa)). An IAB-binding region spans residues 328 to 341 (TLTKQDENDDDDDW). The interval 333–418 (DENDDDDDWN…MPTLIELMKD (86 aa)) is ran-GTP binding. An N6-acetyllysine mark is found at Lys834 and Lys866.

Belongs to the importin beta family. Importin beta-1 subfamily. In terms of assembly, forms a complex with an importin alpha subunit. Interacts with XPO1. Forms a heterodimer with IPO7. The KPNB1/IPO7 heterodimer interacts with H1 histone. Interacts with SNUPN. Interacts with H2A, H2B, H3 and H4 histones. Component of an import snRNP complex composed of KPNB1, SNUPN, SMN1 and ZNF259. Component of a nuclear export receptor complex composed of KPNB1, Ran, SNUPN and XPO1. Interacts with SRY. Interacts with PRKCI/atypical protein kinase C iota. Interacts with KPNA2. Interacts with KPNA7. Interacts with SNAI1 (via zinc fingers) and SNAI2 (via zinc fingers). Interacts with SLC35G1 and STIM1. Interacts with DCAF8. Interacts with RAN. Interacts with NUMA1 (via C-terminus); this interaction is inhibited by RanGTP. Interacts with ZBED1/hDREF; required for nuclear import of ZBED1/hDREF. Interacts with SRP19. Interacts with RPL23A (via BIB domain), RPS7 and RPL5. In terms of processing, mono-ADP-ribosylated by PARP16.

The protein resides in the cytoplasm. It is found in the nucleus envelope. Its function is as follows. Functions in nuclear protein import, either in association with an adapter protein, like an importin-alpha subunit, which binds to nuclear localization signals (NLS) in cargo substrates, or by acting as autonomous nuclear transport receptor. Acting autonomously, serves itself as NLS receptor. Docking of the importin/substrate complex to the nuclear pore complex (NPC) is mediated by KPNB1 through binding to nucleoporin FxFG repeats and the complex is subsequently translocated through the pore by an energy requiring, Ran-dependent mechanism. At the nucleoplasmic side of the NPC, Ran binds to importin-beta and the three components separate and importin-alpha and -beta are re-exported from the nucleus to the cytoplasm where GTP hydrolysis releases Ran from importin. The directionality of nuclear import is thought to be conferred by an asymmetric distribution of the GTP- and GDP-bound forms of Ran between the cytoplasm and nucleus. Mediates autonomously the nuclear import of ribosomal proteins RPL23A, RPS7 and RPL5. In association with IPO7, mediates the nuclear import of H1 histone. In vitro, mediates nuclear import of H2A, H2B, H3 and H4 histones. Imports MRTFA, SNAI1 and PRKCI into the nucleus. This chain is Importin subunit beta-1 (Kpnb1), found in Rattus norvegicus (Rat).